Consider the following 94-residue polypeptide: PqqA binding protein (94 aa).

Belongs to the PqqD family. As to quaternary structure, monomer. Interacts with PqqE.

Its pathway is cofactor biosynthesis; pyrroloquinoline quinone biosynthesis. Functionally, functions as a PqqA binding protein and presents PqqA to PqqE, in the pyrroloquinoline quinone (PQQ) biosynthetic pathway. The protein is PqqA binding protein of Acinetobacter baumannii (strain AB307-0294).